Consider the following 200-residue polypeptide: Holliday junction branch migration complex subunit RuvA (200 aa).

Positions 1–64 (MIGQLTGLVG…EDAIQLFGFA (64 aa)) are domain I. The tract at residues 65–143 (TTDERDWFRL…KMPGGGGTVS (79 aa)) is domain II. Residues 144–148 (APGIV) form a flexible linker region. Residues 149-200 (SGPSVENDALLALAGLGFRRAEAWPVLSKVLAENENATLDLAIRLSLKDLAR) are domain III.

This sequence belongs to the RuvA family. In terms of assembly, homotetramer. Forms an RuvA(8)-RuvB(12)-Holliday junction (HJ) complex. HJ DNA is sandwiched between 2 RuvA tetramers; dsDNA enters through RuvA and exits via RuvB. An RuvB hexamer assembles on each DNA strand where it exits the tetramer. Each RuvB hexamer is contacted by two RuvA subunits (via domain III) on 2 adjacent RuvB subunits; this complex drives branch migration. In the full resolvosome a probable DNA-RuvA(4)-RuvB(12)-RuvC(2) complex forms which resolves the HJ.

It localises to the cytoplasm. The RuvA-RuvB-RuvC complex processes Holliday junction (HJ) DNA during genetic recombination and DNA repair, while the RuvA-RuvB complex plays an important role in the rescue of blocked DNA replication forks via replication fork reversal (RFR). RuvA specifically binds to HJ cruciform DNA, conferring on it an open structure. The RuvB hexamer acts as an ATP-dependent pump, pulling dsDNA into and through the RuvAB complex. HJ branch migration allows RuvC to scan DNA until it finds its consensus sequence, where it cleaves and resolves the cruciform DNA. This chain is Holliday junction branch migration complex subunit RuvA, found in Gluconobacter oxydans (strain 621H) (Gluconobacter suboxydans).